The primary structure comprises 364 residues: L-carnitine dehydrogenase (364 aa).

11 to 16 lines the NAD(+) pocket; the sequence is GGGVIG. The tract at residues 336–364 is disordered; that stretch reads KPAASTAAEKAKASKPVKKAEKPKKKKKG. Over residues 348–364 the composition is skewed to basic residues; it reads ASKPVKKAEKPKKKKKG.

Belongs to the 3-hydroxyacyl-CoA dehydrogenase family. L-carnitine dehydrogenase subfamily. In terms of assembly, homodimer.

The protein resides in the cytoplasm. The catalysed reaction is carnitine + NAD(+) = 3-dehydrocarnitine + NADH + H(+). It participates in amine and polyamine metabolism; carnitine metabolism. In terms of biological role, catalyzes the NAD(+)-dependent oxidation of L-carnitine to 3-dehydrocarnitine. In Mesorhizobium japonicum (strain LMG 29417 / CECT 9101 / MAFF 303099) (Mesorhizobium loti (strain MAFF 303099)), this protein is L-carnitine dehydrogenase.